Here is a 526-residue protein sequence, read N- to C-terminus: GMP synthase [glutamine-hydrolyzing] (526 aa).

In terms of domain architecture, Glutamine amidotransferase type-1 spans 3–199; the sequence is RVAIIDFGSQ…FVRIAGCDNN (197 aa). The active-site Nucleophile is C83. Catalysis depends on residues H174 and E176. A GMPS ATP-PPase domain is found at 200–392; it reads WTVESFLDEQ…LGISDEILMR (193 aa). 227-233 contacts ATP; sequence SGGVDSS.

In terms of assembly, homodimer.

The catalysed reaction is XMP + L-glutamine + ATP + H2O = GMP + L-glutamate + AMP + diphosphate + 2 H(+). It participates in purine metabolism; GMP biosynthesis; GMP from XMP (L-Gln route): step 1/1. Functionally, catalyzes the synthesis of GMP from XMP. This Ehrlichia chaffeensis (strain ATCC CRL-10679 / Arkansas) protein is GMP synthase [glutamine-hydrolyzing].